We begin with the raw amino-acid sequence, 726 residues long: A-type inclusion protein A25 homolog (726 aa).

The interval 342–361 is disordered; the sequence is TNTGIEEPHATGGDKEDQPI. Over residues 347–360 the composition is skewed to basic and acidic residues; sequence EEPHATGGDKEDQP. 4 consecutive repeat copies span residues 612–634, 639–661, 667–689, and 691–713. Residues 612–713 are 4 X approximate tandem repeats; the sequence is RELEEERRRV…ERQLNDCRRN (102 aa).

This sequence belongs to the poxviridae A25 protein family. Interacts (via N-terminus) with protein A26.

It is found in the virion. In terms of biological role, structural protein that forms a matrix surrounding the mature virion (MV) through interaction with protein A26. Presence of protein A25 in the virion structurally prevents direct virus-cell fusion mechanism. The chain is A-type inclusion protein A25 homolog from Camelus.